Reading from the N-terminus, the 349-residue chain is NADH-quinone oxidoreductase subunit H (349 aa).

Transmembrane regions (helical) follow at residues 14-34 (LLVW…GCVA), 85-105 (GLFL…WAVI), 120-140 (LLYI…AGWA), 164-184 (MGFA…VDIV), 196-216 (ILSW…ISGV), 243-263 (GMAF…VAAL), 285-305 (AGGF…FLWF), and 324-344 (VFIP…FSPL).

It belongs to the complex I subunit 1 family. NDH-1 is composed of 14 different subunits. Subunits NuoA, H, J, K, L, M, N constitute the membrane sector of the complex.

Its subcellular location is the cell inner membrane. It catalyses the reaction a quinone + NADH + 5 H(+)(in) = a quinol + NAD(+) + 4 H(+)(out). NDH-1 shuttles electrons from NADH, via FMN and iron-sulfur (Fe-S) centers, to quinones in the respiratory chain. The immediate electron acceptor for the enzyme in this species is believed to be ubiquinone. Couples the redox reaction to proton translocation (for every two electrons transferred, four hydrogen ions are translocated across the cytoplasmic membrane), and thus conserves the redox energy in a proton gradient. This subunit may bind ubiquinone. The chain is NADH-quinone oxidoreductase subunit H from Chromobacterium violaceum (strain ATCC 12472 / DSM 30191 / JCM 1249 / CCUG 213 / NBRC 12614 / NCIMB 9131 / NCTC 9757 / MK).